The primary structure comprises 310 residues: ADP-L-glycero-D-manno-heptose-6-epimerase (310 aa).

NADP(+) contacts are provided by residues Phe-10–Ile-11, Asp-31–Asn-32, Lys-38, Lys-53, Glu-75–Ser-79, and Asn-92. The Proton acceptor role is filled by Tyr-140. Lys-144 is an NADP(+) binding site. Position 169 (Asn-169) interacts with substrate. Residues Val-170 and Lys-178 each contribute to the NADP(+) site. Lys-178 serves as the catalytic Proton acceptor. Substrate is bound by residues Ser-180, His-187, Phe-201 to Ser-204, Arg-209, and Tyr-272.

This sequence belongs to the NAD(P)-dependent epimerase/dehydratase family. HldD subfamily. Homopentamer. NADP(+) serves as cofactor.

It catalyses the reaction ADP-D-glycero-beta-D-manno-heptose = ADP-L-glycero-beta-D-manno-heptose. Its pathway is nucleotide-sugar biosynthesis; ADP-L-glycero-beta-D-manno-heptose biosynthesis; ADP-L-glycero-beta-D-manno-heptose from D-glycero-beta-D-manno-heptose 7-phosphate: step 4/4. Its function is as follows. Catalyzes the interconversion between ADP-D-glycero-beta-D-manno-heptose and ADP-L-glycero-beta-D-manno-heptose via an epimerization at carbon 6 of the heptose. The protein is ADP-L-glycero-D-manno-heptose-6-epimerase of Cronobacter sakazakii (strain ATCC BAA-894) (Enterobacter sakazakii).